Here is an 828-residue protein sequence, read N- to C-terminus: BEN domain-containing protein 3 (828 aa).

Residue Lys20 forms a Glycyl lysine isopeptide (Lys-Gly) (interchain with G-Cter in SUMO); alternate linkage. Residue Lys20 forms a Glycyl lysine isopeptide (Lys-Gly) (interchain with G-Cter in SUMO1); alternate linkage. Lys20 is covalently cross-linked (Glycyl lysine isopeptide (Lys-Gly) (interchain with G-Cter in SUMO2); alternate). Residues Lys41, Lys56, Lys58, Lys73, Lys128, Lys129, Lys137, Lys142, and Lys158 each participate in a glycyl lysine isopeptide (Lys-Gly) (interchain with G-Cter in SUMO2) cross-link. The Nuclear localization signal motif lies at 56 to 58 (KRK). Position 164 is a phosphoserine (Ser164). The disordered stretch occupies residues 164 to 184 (SPSSLRLLNEPQKRDCGSTGA). Lys176 is covalently cross-linked (Glycyl lysine isopeptide (Lys-Gly) (interchain with G-Cter in SUMO2)). In terms of domain architecture, BEN 1 spans 242-343 (PPPEYQLTAA…DFFSRFWAQR (102 aa)). The residue at position 379 (Ser379) is a Phosphoserine. A BEN 2 domain is found at 387–487 (ASDHVVDTQD…DELEGLGLDA (101 aa)). A Glycyl lysine isopeptide (Lys-Gly) (interchain with G-Cter in SUMO2) cross-link involves residue Lys427. The interval 483–504 (LGLDAGSEGDPPRDDCYDSSSL) is disordered. Position 489 is a phosphoserine (Ser489). Lys512 is covalently cross-linked (Glycyl lysine isopeptide (Lys-Gly) (interchain with G-Cter in SUMO); alternate). A Glycyl lysine isopeptide (Lys-Gly) (interchain with G-Cter in SUMO2); alternate cross-link involves residue Lys512. A Glycyl lysine isopeptide (Lys-Gly) (interchain with G-Cter in SUMO2) cross-link involves residue Lys528. The BEN 3 domain maps to 548–650 (VPGADCLLSK…ERCRRRDTEQ (103 aa)). A Glycyl lysine isopeptide (Lys-Gly) (interchain with G-Cter in SUMO2) cross-link involves residue Lys700. The BEN 4 domain maps to 715–816 (VPSPYLLSDK…ERCRRPNRKK (102 aa)).

Homooligomer, probably a homooctamer. Interacts with HDAC2 and HDAC3, but not HDAC1. Interacts with SALL4. Interacts with SMARCA5/SNF2H, BAZ2A/TIP5 and USP21. Interacts with the nucleosome remodeling and histone deacetylase (NuRD) repressor complex. Interacts (via BEN domains 1 and 3) with ERCC6L (via N-terminal TPR repeat); the interaction is direct. In terms of processing, sumoylated at Lys-20 by SUMO1 and at Lys-512 by SUMO1, SUMO2 and SUMO3. Sumoylation probably occurs sequentially, with that of Lys-20 preceding that of Lys-512. It does not alter association with heterochromatin, but is required for the repression of transcription. Expressed at least in heart, kidney, liver, ovary and spleen, with highest levels in spleen and lowest in heart. Expressed on the surface of T-cells.

The protein resides in the nucleus. The protein localises to the nucleolus. Its function is as follows. Transcriptional repressor which associates with the NoRC (nucleolar remodeling complex) complex and plays a key role in repressing rDNA transcription. The sumoylated form modulates the stability of the NoRC complex component BAZ2A/TIP5 by controlling its USP21-mediated deubiquitination. Binds to unmethylated major satellite DNA and is involved in the recruitment of the Polycomb repressive complex 2 (PRC2) to major satellites. Stimulates the ERCC6L translocase and ATPase activities. In Homo sapiens (Human), this protein is BEN domain-containing protein 3 (BEND3).